The chain runs to 747 residues: Tegument protein UL46 homolog (747 aa).

Disordered stretches follow at residues 437–484, 525–593, 611–665, and 689–747; these read FCCP…SPRT, QRSD…DYMR, TPYM…PEVV, and SASR…VSSL. The span at 465–484 shows a compositional bias: polar residues; sequence LRSSRQLPTSPPSNIVSPRT. The segment covering 528 to 540 has biased composition (low complexity); that stretch reads DSSSSDNSTCSST. Over residues 541 to 553 the composition is skewed to polar residues; sequence ETQYITLPSTPSP. Composition is skewed to basic and acidic residues over residues 707–724 and 736–747; these read VCRE…DGFI and KHPDQTERVSSL.

This sequence belongs to the herpesviridae HHV-1 VP11/12 protein family.

It localises to the virion tegument. It is found in the host cell membrane. Its function is as follows. Modulates alpha trans-inducing factor-dependent activation of alpha genes. In Equine herpesvirus 1 (strain Ab4p) (EHV-1), this protein is Tegument protein UL46 homolog.